A 190-amino-acid chain; its full sequence is Holliday junction branch migration complex subunit RuvA (190 aa).

The domain I stretch occupies residues 1-64; that stretch reads MIGSLTGIIE…DNLTQLYGFL (64 aa). The tract at residues 65 to 142 is domain II; that stretch reads DKQEQDYMRM…KMPIEETLII (78 aa). A region of interest (flexible linker) is located at residue lysine 143. The segment at 143–190 is domain III; that stretch reads KEDDSLAALISLGYDKLKAFNAIQEIKANFPDDSIQEIIRKALQKLSQ.

It belongs to the RuvA family. As to quaternary structure, homotetramer. Forms an RuvA(8)-RuvB(12)-Holliday junction (HJ) complex. HJ DNA is sandwiched between 2 RuvA tetramers; dsDNA enters through RuvA and exits via RuvB. An RuvB hexamer assembles on each DNA strand where it exits the tetramer. Each RuvB hexamer is contacted by two RuvA subunits (via domain III) on 2 adjacent RuvB subunits; this complex drives branch migration. In the full resolvosome a probable DNA-RuvA(4)-RuvB(12)-RuvC(2) complex forms which resolves the HJ.

The protein resides in the cytoplasm. The RuvA-RuvB-RuvC complex processes Holliday junction (HJ) DNA during genetic recombination and DNA repair, while the RuvA-RuvB complex plays an important role in the rescue of blocked DNA replication forks via replication fork reversal (RFR). RuvA specifically binds to HJ cruciform DNA, conferring on it an open structure. The RuvB hexamer acts as an ATP-dependent pump, pulling dsDNA into and through the RuvAB complex. HJ branch migration allows RuvC to scan DNA until it finds its consensus sequence, where it cleaves and resolves the cruciform DNA. The sequence is that of Holliday junction branch migration complex subunit RuvA from Ehrlichia chaffeensis (strain ATCC CRL-10679 / Arkansas).